Consider the following 92-residue polypeptide: Small ribosomal subunit protein uS19 (92 aa).

It belongs to the universal ribosomal protein uS19 family.

Functionally, protein S19 forms a complex with S13 that binds strongly to the 16S ribosomal RNA. In Novosphingobium aromaticivorans (strain ATCC 700278 / DSM 12444 / CCUG 56034 / CIP 105152 / NBRC 16084 / F199), this protein is Small ribosomal subunit protein uS19.